Reading from the N-terminus, the 107-residue chain is Replication initiation control protein YabA (107 aa).

H81, C83, C97, and C100 together coordinate Zn(2+).

Belongs to the YabA family. Homotetramer. Interacts with both DnaA and DnaN, acting as a bridge between these two proteins. Zn(2+) serves as cofactor.

Its subcellular location is the cytoplasm. It localises to the nucleoid. Functionally, involved in control of chromosome replication initiation. Inhibits the cooperative binding of DnaA to the oriC region, thus negatively regulating initiation of chromosome replication. Inhibits the ability of DnaA-ATP to form a helix on DNA; does not disassemble preformed DnaA-DNA helices. Decreases the residence time of DnaA on the chromosome at its binding sites (oriC, replication forks and promoter-binding sites). Tethers DnaA to the replication machinery via the DNA polymerase beta sliding clamp subunit (dnaN). Associates with oriC and other DnaA targets on the chromosome in a DnaA-dependent manner. This Streptococcus pyogenes serotype M1 protein is Replication initiation control protein YabA.